Reading from the N-terminus, the 729-residue chain is 1,4-alpha-glucan branching enzyme GlgB (729 aa).

Asp409 acts as the Nucleophile in catalysis. Catalysis depends on Glu462, which acts as the Proton donor.

Belongs to the glycosyl hydrolase 13 family. GlgB subfamily. In terms of assembly, monomer.

It carries out the reaction Transfers a segment of a (1-&gt;4)-alpha-D-glucan chain to a primary hydroxy group in a similar glucan chain.. Its pathway is glycan biosynthesis; glycogen biosynthesis. In terms of biological role, catalyzes the formation of the alpha-1,6-glucosidic linkages in glycogen by scission of a 1,4-alpha-linked oligosaccharide from growing alpha-1,4-glucan chains and the subsequent attachment of the oligosaccharide to the alpha-1,6 position. The sequence is that of 1,4-alpha-glucan branching enzyme GlgB from Saccharophagus degradans (strain 2-40 / ATCC 43961 / DSM 17024).